Here is a 278-residue protein sequence, read N- to C-terminus: ATP synthase subunit delta (278 aa).

The protein belongs to the ATPase delta chain family. In terms of assembly, F-type ATPases have 2 components, F(1) - the catalytic core - and F(0) - the membrane proton channel. F(1) has five subunits: alpha(3), beta(3), gamma(1), delta(1), epsilon(1). F(0) has three main subunits: a(1), b(2) and c(10-14). The alpha and beta chains form an alternating ring which encloses part of the gamma chain. F(1) is attached to F(0) by a central stalk formed by the gamma and epsilon chains, while a peripheral stalk is formed by the delta and b chains.

It localises to the cell membrane. F(1)F(0) ATP synthase produces ATP from ADP in the presence of a proton or sodium gradient. F-type ATPases consist of two structural domains, F(1) containing the extramembraneous catalytic core and F(0) containing the membrane proton channel, linked together by a central stalk and a peripheral stalk. During catalysis, ATP synthesis in the catalytic domain of F(1) is coupled via a rotary mechanism of the central stalk subunits to proton translocation. In terms of biological role, this protein is part of the stalk that links CF(0) to CF(1). It either transmits conformational changes from CF(0) to CF(1) or is implicated in proton conduction. This is ATP synthase subunit delta from Rhodococcus opacus (strain B4).